A 448-amino-acid polypeptide reads, in one-letter code: MSTTSAINGNHYEQLHQGRTNMYKSKVNVVLGAQWGDEGKGKVVDMLASEVDIVCRCQGGNNAGHTVVANGTEFDFHLLPSGVVNEKCISVIGNGVVIHLPSLFDEVLKNEAKGLQQLENRLIISDRAHLVFDFHQQVDGMQEAEKGGKSLGTTKKGIGPAYSSKATRNGIRVGELLGDFNLFSEKFKSIVNTHLRLFPSIKVDVDAELARYKDYVDKVRPYVKDTICFLHTALRNGKTILVEGANAAMLDIDFGTYPYVTSSNCSIGGVLTGLGLPPQTIGEVIGVVKAYTTRVGDGPFPTEQLNEIGDLLQTRGFEIGVTTKRKRRCGWLDIPLLKYTSLVNGYTCICLTKLDILDTLPEIKVGVNYKRSNGEKLDHFPGTISELSDIEVEYAVLPGWQTSTEHIRNFKELPENAQNYVRFLESQLSVPVRWVGVGKGRESIINVH.

Residues 36–42 (GDEGKGK) and 64–66 (GHT) contribute to the GTP site. The active-site Proton acceptor is Asp-37. Asp-37 and Gly-64 together coordinate Mg(2+). Residues 37–40 (DEGK), 62–65 (NAGH), Thr-154, Arg-168, Asn-246, Thr-261, and Arg-325 each bind IMP. His-65 (proton donor) is an active-site residue. 321-327 (VTTKRKR) serves as a coordination point for substrate. GTP is bound by residues Arg-327, 353-355 (KLD), and 436-438 (GVG).

Belongs to the adenylosuccinate synthetase family. In terms of assembly, homodimer. It depends on Mg(2+) as a cofactor.

The protein localises to the cytoplasm. The enzyme catalyses IMP + L-aspartate + GTP = N(6)-(1,2-dicarboxyethyl)-AMP + GDP + phosphate + 2 H(+). It participates in purine metabolism; AMP biosynthesis via de novo pathway; AMP from IMP: step 1/2. Functionally, plays an important role in the de novo pathway and in the salvage pathway of purine nucleotide biosynthesis. Catalyzes the first committed step in the biosynthesis of AMP from IMP. The chain is Adenylosuccinate synthetase from Drosophila mojavensis (Fruit fly).